A 113-amino-acid chain; its full sequence is Replication initiation control protein YabA (113 aa).

Residues H88, C90, C104, and C107 each contribute to the Zn(2+) site.

The protein belongs to the YabA family. As to quaternary structure, homotetramer. Interacts with both DnaA and DnaN, acting as a bridge between these two proteins. Zn(2+) is required as a cofactor.

It is found in the cytoplasm. Its subcellular location is the nucleoid. Functionally, involved in control of chromosome replication initiation. Inhibits the cooperative binding of DnaA to the oriC region, thus negatively regulating initiation of chromosome replication. Inhibits the ability of DnaA-ATP to form a helix on DNA; does not disassemble preformed DnaA-DNA helices. Decreases the residence time of DnaA on the chromosome at its binding sites (oriC, replication forks and promoter-binding sites). Tethers DnaA to the replication machinery via the DNA polymerase beta sliding clamp subunit (dnaN). Associates with oriC and other DnaA targets on the chromosome in a DnaA-dependent manner. In Staphylococcus saprophyticus subsp. saprophyticus (strain ATCC 15305 / DSM 20229 / NCIMB 8711 / NCTC 7292 / S-41), this protein is Replication initiation control protein YabA.